We begin with the raw amino-acid sequence, 116 residues long: Phosphoribosyl-AMP cyclohydrolase (116 aa).

Position 78 (aspartate 78) interacts with Mg(2+). Cysteine 79 provides a ligand contact to Zn(2+). Residues aspartate 80 and aspartate 82 each coordinate Mg(2+). 2 residues coordinate Zn(2+): cysteine 95 and cysteine 102.

The protein belongs to the PRA-CH family. In terms of assembly, homodimer. Mg(2+) serves as cofactor. Zn(2+) is required as a cofactor.

The protein localises to the cytoplasm. The enzyme catalyses 1-(5-phospho-beta-D-ribosyl)-5'-AMP + H2O = 1-(5-phospho-beta-D-ribosyl)-5-[(5-phospho-beta-D-ribosylamino)methylideneamino]imidazole-4-carboxamide. It functions in the pathway amino-acid biosynthesis; L-histidine biosynthesis; L-histidine from 5-phospho-alpha-D-ribose 1-diphosphate: step 3/9. In terms of biological role, catalyzes the hydrolysis of the adenine ring of phosphoribosyl-AMP. The protein is Phosphoribosyl-AMP cyclohydrolase of Acidiphilium cryptum (strain JF-5).